The sequence spans 543 residues: CTP synthase (543 aa).

The tract at residues 1-265 is amidoligase domain; the sequence is MARYIFITGG…DDEVLAAFGI (265 aa). A CTP-binding site is contributed by S13. S13 contacts UTP. Residue 14–19 coordinates ATP; it reads SLGKGL. Residue Y54 coordinates L-glutamine. Residue D71 participates in ATP binding. Mg(2+) is bound by residues D71 and E139. CTP is bound by residues 146 to 148, 186 to 191, and K222; these read DIE and KTKPTQ. UTP-binding positions include 186–191 and K222; that span reads KTKPTQ. Residue 238–240 coordinates ATP; sequence RDV. One can recognise a Glutamine amidotransferase type-1 domain in the interval 291–542; it reads TIAIVGKYTG…VQAAVVQSRL (252 aa). G353 is a binding site for L-glutamine. C380 serves as the catalytic Nucleophile; for glutamine hydrolysis. L-glutamine-binding positions include 381 to 384, E404, and R470; that span reads FGMQ. Residues H515 and E517 contribute to the active site.

It belongs to the CTP synthase family. Homotetramer.

It catalyses the reaction UTP + L-glutamine + ATP + H2O = CTP + L-glutamate + ADP + phosphate + 2 H(+). The catalysed reaction is L-glutamine + H2O = L-glutamate + NH4(+). The enzyme catalyses UTP + NH4(+) + ATP = CTP + ADP + phosphate + 2 H(+). It functions in the pathway pyrimidine metabolism; CTP biosynthesis via de novo pathway; CTP from UDP: step 2/2. With respect to regulation, allosterically activated by GTP, when glutamine is the substrate; GTP has no effect on the reaction when ammonia is the substrate. The allosteric effector GTP functions by stabilizing the protein conformation that binds the tetrahedral intermediate(s) formed during glutamine hydrolysis. Inhibited by the product CTP, via allosteric rather than competitive inhibition. Catalyzes the ATP-dependent amination of UTP to CTP with either L-glutamine or ammonia as the source of nitrogen. Regulates intracellular CTP levels through interactions with the four ribonucleotide triphosphates. This Rhodopseudomonas palustris (strain BisB18) protein is CTP synthase.